Reading from the N-terminus, the 314-residue chain is Ferrochelatase (314 aa).

2 residues coordinate Fe cation: His184 and Glu259.

It belongs to the ferrochelatase family.

The protein localises to the cytoplasm. The enzyme catalyses heme b + 2 H(+) = protoporphyrin IX + Fe(2+). The protein operates within porphyrin-containing compound metabolism; protoheme biosynthesis; protoheme from protoporphyrin-IX: step 1/1. Functionally, catalyzes the ferrous insertion into protoporphyrin IX. The protein is Ferrochelatase of Chlamydia trachomatis serovar L2 (strain ATCC VR-902B / DSM 19102 / 434/Bu).